The chain runs to 362 residues: NAC domain-containing protein 5 (362 aa).

The 149-residue stretch at 3-151 (NPVGFRFRPT…TYTLCKVKFK (149 aa)) folds into the NAC domain. A DNA-binding region spans residues 107–157 (IGEKRVLVFKNHGGSKSDWAMHEYHATFSSPNQIMTYTLCKVKFKGERREF). The segment at 240–266 (DDRNNHTPQKPLTGVFSDHSTDGSDSD) is disordered.

The protein resides in the nucleus. This Arabidopsis thaliana (Mouse-ear cress) protein is NAC domain-containing protein 5 (NAC005).